We begin with the raw amino-acid sequence, 292 residues long: Homoserine kinase (292 aa).

84-94 (PLARGMGSSSA) lines the ATP pocket.

The protein belongs to the GHMP kinase family. Homoserine kinase subfamily.

Its subcellular location is the cytoplasm. It carries out the reaction L-homoserine + ATP = O-phospho-L-homoserine + ADP + H(+). It functions in the pathway amino-acid biosynthesis; L-threonine biosynthesis; L-threonine from L-aspartate: step 4/5. Catalyzes the ATP-dependent phosphorylation of L-homoserine to L-homoserine phosphate. The protein is Homoserine kinase of Campylobacter lari (strain RM2100 / D67 / ATCC BAA-1060).